A 294-amino-acid polypeptide reads, in one-letter code: Urease accessory protein UreD (294 aa).

Positions 1–22 (MSVEKPVAAGRQNSKATGRHKG) are disordered.

This sequence belongs to the UreD family. UreD, UreF and UreG form a complex that acts as a GTP-hydrolysis-dependent molecular chaperone, activating the urease apoprotein by helping to assemble the nickel containing metallocenter of UreC. The UreE protein probably delivers the nickel.

The protein resides in the cytoplasm. In terms of biological role, required for maturation of urease via the functional incorporation of the urease nickel metallocenter. The sequence is that of Urease accessory protein UreD from Alcanivorax borkumensis (strain ATCC 700651 / DSM 11573 / NCIMB 13689 / SK2).